Reading from the N-terminus, the 77-residue chain is Cell division topological specificity factor (77 aa).

It belongs to the MinE family.

In terms of biological role, prevents the cell division inhibition by proteins MinC and MinD at internal division sites while permitting inhibition at polar sites. This ensures cell division at the proper site by restricting the formation of a division septum at the midpoint of the long axis of the cell. This chain is Cell division topological specificity factor, found in Helicobacter pylori (strain Shi470).